The chain runs to 285 residues: Transmembrane protein 53-A (285 aa).

A helical transmembrane segment spans residues 165–185; sequence FLALAAFAILVIILRILLYPL.

This sequence belongs to the TMEM53 family.

The protein localises to the nucleus outer membrane. Ensures normal bone formation, through the negative regulation of bone morphogenetic protein (BMP) signaling in osteoblast lineage cells by blocking cytoplasm-nucleus translocation of phosphorylated SMAD proteins. The sequence is that of Transmembrane protein 53-A (tmem53-a) from Xenopus laevis (African clawed frog).